The following is a 433-amino-acid chain: Serine hydroxymethyltransferase (433 aa).

(6S)-5,6,7,8-tetrahydrofolate is bound by residues leucine 132 and 136 to 138; that span reads GHL. The residue at position 241 (lysine 241) is an N6-(pyridoxal phosphate)lysine.

Belongs to the SHMT family. Homodimer. It depends on pyridoxal 5'-phosphate as a cofactor.

Its subcellular location is the cytoplasm. It catalyses the reaction (6R)-5,10-methylene-5,6,7,8-tetrahydrofolate + glycine + H2O = (6S)-5,6,7,8-tetrahydrofolate + L-serine. It functions in the pathway one-carbon metabolism; tetrahydrofolate interconversion. It participates in amino-acid biosynthesis; glycine biosynthesis; glycine from L-serine: step 1/1. Its function is as follows. Catalyzes the reversible interconversion of serine and glycine with tetrahydrofolate (THF) serving as the one-carbon carrier. This reaction serves as the major source of one-carbon groups required for the biosynthesis of purines, thymidylate, methionine, and other important biomolecules. Also exhibits THF-independent aldolase activity toward beta-hydroxyamino acids, producing glycine and aldehydes, via a retro-aldol mechanism. The sequence is that of Serine hydroxymethyltransferase from Bradyrhizobium sp. (strain ORS 278).